A 355-amino-acid polypeptide reads, in one-letter code: Anhydro-N-acetylmuramic acid kinase (355 aa).

9 to 16 (GTSLDGVD) contacts ATP.

Belongs to the anhydro-N-acetylmuramic acid kinase family.

It carries out the reaction 1,6-anhydro-N-acetyl-beta-muramate + ATP + H2O = N-acetyl-D-muramate 6-phosphate + ADP + H(+). It functions in the pathway amino-sugar metabolism; 1,6-anhydro-N-acetylmuramate degradation. The protein operates within cell wall biogenesis; peptidoglycan recycling. Catalyzes the specific phosphorylation of 1,6-anhydro-N-acetylmuramic acid (anhMurNAc) with the simultaneous cleavage of the 1,6-anhydro ring, generating MurNAc-6-P. Is required for the utilization of anhMurNAc either imported from the medium or derived from its own cell wall murein, and thus plays a role in cell wall recycling. This chain is Anhydro-N-acetylmuramic acid kinase, found in Paramagnetospirillum magneticum (strain ATCC 700264 / AMB-1) (Magnetospirillum magneticum).